The chain runs to 463 residues: Asparagine--tRNA ligase (463 aa).

Belongs to the class-II aminoacyl-tRNA synthetase family. As to quaternary structure, homodimer.

It is found in the cytoplasm. It catalyses the reaction tRNA(Asn) + L-asparagine + ATP = L-asparaginyl-tRNA(Asn) + AMP + diphosphate + H(+). The protein is Asparagine--tRNA ligase of Clostridium tetani (strain Massachusetts / E88).